The following is a 356-amino-acid chain: Phospho-N-acetylmuramoyl-pentapeptide-transferase (356 aa).

Transmembrane regions (helical) follow at residues 27 to 47 (AAAITALLIGLIFGPRFIGWM), 74 to 94 (MGGLMILIAVSISLFLWMDFA), 97 to 117 (YVWACIAVMLGFGVIGFIDDY), 128 to 148 (VSGKVRLLWEFGIAFFACYLI), 164 to 184 (PVIDLGWFYYPFAAFVIVGTA), 201 to 221 (VIIASLAFFVISYVVGNAVFA), 241 to 261 (AIIGAGFAFLWFNAPPAAIFM), 284 to 304 (IVLGIVGGLFVAEALSVIIQV), and 333 to 353 (TVVIRFWIISFALALLGLATL).

This sequence belongs to the glycosyltransferase 4 family. MraY subfamily. The cofactor is Mg(2+).

The protein localises to the cell inner membrane. It catalyses the reaction UDP-N-acetyl-alpha-D-muramoyl-L-alanyl-gamma-D-glutamyl-meso-2,6-diaminopimeloyl-D-alanyl-D-alanine + di-trans,octa-cis-undecaprenyl phosphate = di-trans,octa-cis-undecaprenyl diphospho-N-acetyl-alpha-D-muramoyl-L-alanyl-D-glutamyl-meso-2,6-diaminopimeloyl-D-alanyl-D-alanine + UMP. The protein operates within cell wall biogenesis; peptidoglycan biosynthesis. Functionally, catalyzes the initial step of the lipid cycle reactions in the biosynthesis of the cell wall peptidoglycan: transfers peptidoglycan precursor phospho-MurNAc-pentapeptide from UDP-MurNAc-pentapeptide onto the lipid carrier undecaprenyl phosphate, yielding undecaprenyl-pyrophosphoryl-MurNAc-pentapeptide, known as lipid I. The sequence is that of Phospho-N-acetylmuramoyl-pentapeptide-transferase from Zymomonas mobilis subsp. mobilis (strain ATCC 31821 / ZM4 / CP4).